We begin with the raw amino-acid sequence, 395 residues long: Probable alcohol dehydrogenase EutG (395 aa).

Residues Asp57, Gly116–Asp120, Thr156–Thr160, Lys178, and Val197–Val201 each bind NAD(+). Residues Asp212, His216, His281, and His295 each contribute to the Fe cation site. Positions 295 and 354 each coordinate NAD(+).

This sequence belongs to the iron-containing alcohol dehydrogenase family. It depends on Fe cation as a cofactor.

It is found in the bacterial microcompartment. The enzyme catalyses ethanol + NAD(+) = acetaldehyde + NADH + H(+). Its pathway is amine and polyamine degradation; ethanolamine degradation. Functionally, probably acts on the acetaldehyde produced by the degradation of ethanolamine, producing ethanol. In terms of biological role, expression of the eut operon allows this bacteria to use ethanolamine (EA) as a carbon, nitrogen and energy source. It relies on cobalamin (vitamin B12) both as a cofactor for the ethanolamine ammonia-lyase (EAL) activity and to induce the operon. EA enhances bacterial survival in macrophages in a concentration-dependent manner, suggesting it is an important nutrient during infection. This Salmonella typhimurium (strain LT2 / SGSC1412 / ATCC 700720) protein is Probable alcohol dehydrogenase EutG.